We begin with the raw amino-acid sequence, 629 residues long: tRNA uridine 5-carboxymethylaminomethyl modification enzyme MnmG (629 aa).

FAD contacts are provided by residues 13–18 (GGGHAG), Val-125, and Ser-180. 273-287 (GPRYCPSIEDKVMRF) is an NAD(+) binding site. An FAD-binding site is contributed by Gln-370.

This sequence belongs to the MnmG family. As to quaternary structure, homodimer. Heterotetramer of two MnmE and two MnmG subunits. FAD serves as cofactor.

The protein localises to the cytoplasm. Its function is as follows. NAD-binding protein involved in the addition of a carboxymethylaminomethyl (cmnm) group at the wobble position (U34) of certain tRNAs, forming tRNA-cmnm(5)s(2)U34. The sequence is that of tRNA uridine 5-carboxymethylaminomethyl modification enzyme MnmG from Salmonella paratyphi A (strain ATCC 9150 / SARB42).